A 229-amino-acid polypeptide reads, in one-letter code: Heptahelical transmembrane protein ADIPOR2 (229 aa).

Residues 1-4 (MQGA) lie on the Cytoplasmic side of the membrane. Residues 5–25 (ASHDAAAAAAAAAVLGGGHGV) traverse the membrane as a helical segment. Over 26-30 (PRWPR) the chain is Extracellular. A helical transmembrane segment spans residues 31–51 (MVFLVGAMTCLAISATAHLLA). Residues 52–66 (CHSRRASVVFWQLDY) are Cytoplasmic-facing. A helical transmembrane segment spans residues 67–87 (AGISAMIVASFVPPVYYAFLC). At 88–92 (HRPAR) the chain is on the extracellular side. The helical transmembrane segment at 93–113 (VAYLSAISALGALVVGALLSP) threads the bilayer. The Cytoplasmic segment spans residues 114 to 124 (PCSSPRFRRLR). Residues 125–145 (AALFLAMGLSGVVPALHALWL) traverse the membrane as a helical segment. Topologically, residues 146–153 (NWGHAACY) are extracellular. The helical transmembrane segment at 154–174 (LALSLEVAMGLAYAAGAWFYV) threads the bilayer. Residues 175-194 (SRVPEKWRPGVFDVVGHSHQ) are Cytoplasmic-facing. Residues 195 to 215 (IFHVLVLVGAVTHYVAVDVLL) traverse the membrane as a helical segment. The Extracellular portion of the chain corresponds to 216 to 229 (NWRETVAAACSATS).

Belongs to the ADIPOR family.

The protein resides in the membrane. May play a role in abiotic stress response. In Oryza sativa subsp. japonica (Rice), this protein is Heptahelical transmembrane protein ADIPOR2 (ADIPOR2).